Here is a 173-residue protein sequence, read N- to C-terminus: uncharacterized protein (173 aa).

Belongs to the ycf73 family.

The protein localises to the plastid. It is found in the chloroplast. This is an uncharacterized protein from Saccharum hybrid (Sugarcane).